The primary structure comprises 668 residues: tRNA 5-methylaminomethyl-2-thiouridine biosynthesis bifunctional protein MnmC (668 aa).

Positions 1–245 (MKHYAIQPAN…KREMLCGVME (245 aa)) are tRNA (mnm(5)s(2)U34)-methyltransferase. The interval 270–668 (IGGGIASALL…LLKGKAVKAG (399 aa)) is FAD-dependent cmnm(5)s(2)U34 oxidoreductase.

In the N-terminal section; belongs to the methyltransferase superfamily. tRNA (mnm(5)s(2)U34)-methyltransferase family. It in the C-terminal section; belongs to the DAO family. FAD is required as a cofactor.

The protein localises to the cytoplasm. The catalysed reaction is 5-aminomethyl-2-thiouridine(34) in tRNA + S-adenosyl-L-methionine = 5-methylaminomethyl-2-thiouridine(34) in tRNA + S-adenosyl-L-homocysteine + H(+). Catalyzes the last two steps in the biosynthesis of 5-methylaminomethyl-2-thiouridine (mnm(5)s(2)U) at the wobble position (U34) in tRNA. Catalyzes the FAD-dependent demodification of cmnm(5)s(2)U34 to nm(5)s(2)U34, followed by the transfer of a methyl group from S-adenosyl-L-methionine to nm(5)s(2)U34, to form mnm(5)s(2)U34. This is tRNA 5-methylaminomethyl-2-thiouridine biosynthesis bifunctional protein MnmC from Escherichia coli O139:H28 (strain E24377A / ETEC).